The following is a 314-amino-acid chain: NADH-ubiquinone oxidoreductase chain 1 (314 aa).

A run of 8 helical transmembrane segments spans residues 5 to 25 (IMPLIGSLLLVICVMVGVAFL), 78 to 98 (FSPVFSLFLSLLIWMCIPYLI), 105 to 125 (LGVLFFLCCTSLGVYTVMIAG), 152 to 172 (ALILLSFIFLVGNYNFLSFYF), 176 to 196 (YVWFIFFCFPLGLVWLASCLA), 227 to 247 (LIFLAEYSSILFMSMLFVVIF), 251 to 271 (DIYSFMFFLKLSFISFIFIWV), and 294 to 314 (LSLNYLFFFVGLKIFFISLLF).

It belongs to the complex I subunit 1 family.

The protein resides in the mitochondrion inner membrane. The catalysed reaction is a ubiquinone + NADH + 5 H(+)(in) = a ubiquinol + NAD(+) + 4 H(+)(out). Its function is as follows. Core subunit of the mitochondrial membrane respiratory chain NADH dehydrogenase (Complex I) that is believed to belong to the minimal assembly required for catalysis. Complex I functions in the transfer of electrons from NADH to the respiratory chain. The immediate electron acceptor for the enzyme is believed to be ubiquinone. This is NADH-ubiquinone oxidoreductase chain 1 (mt:ND1) from Anopheles gambiae (African malaria mosquito).